We begin with the raw amino-acid sequence, 156 residues long: Protein-export protein SecB (156 aa).

It belongs to the SecB family. As to quaternary structure, homotetramer, a dimer of dimers. One homotetramer interacts with 1 SecA dimer.

The protein localises to the cytoplasm. Functionally, one of the proteins required for the normal export of preproteins out of the cell cytoplasm. It is a molecular chaperone that binds to a subset of precursor proteins, maintaining them in a translocation-competent state. It also specifically binds to its receptor SecA. In Pectobacterium carotovorum subsp. carotovorum (strain PC1), this protein is Protein-export protein SecB.